Here is a 423-residue protein sequence, read N- to C-terminus: Endochitinase 42 (423 aa).

The N-terminal stretch at 1-22 (MLSFLGKSVALLAALQATLSSP) is a signal peptide. Positions 23–34 (KPGHRRASVEKR) are excised as a propeptide. The GH18 domain occupies 38–401 (YANSVYFTNW…GTSHRALGGL (364 aa)). Chitin contacts are provided by residues 102 to 103 (GT) and 129 to 132 (GGWT). The Proton donor role is filled by E171. Chitin is bound at residue Y172. N218 is a glycosylation site (N-linked (GlcNAc...) asparagine). Chitin contacts are provided by residues 237 to 240 (MAYD) and W378.

The protein belongs to the glycosyl hydrolase 18 family. Chitinase class V subfamily.

The protein localises to the secreted. The enzyme catalyses Random endo-hydrolysis of N-acetyl-beta-D-glucosaminide (1-&gt;4)-beta-linkages in chitin and chitodextrins.. Its function is as follows. Secreted chitinase involved in the degradation of chitin, a component of the cell walls of fungi and exoskeletal elements of some animals (including worms and arthropods). Plays a morphogenetic role during apical growth, cell division and differentiation (cell wall morphogenesis). Also acts as an antifungal agent. Involved in the degradation and further assimilation of phytopathogenic fungi, namely mycoparasitism, the major mechanism accounting for the antagonistic activity against phytopathogenic fungi displayed by Trichoderma. This Trichoderma harzianum (Hypocrea lixii) protein is Endochitinase 42 (chit42).